We begin with the raw amino-acid sequence, 285 residues long: Bifunctional protein FolD (285 aa).

NADP(+)-binding positions include 165–167 (GRS) and serine 190.

This sequence belongs to the tetrahydrofolate dehydrogenase/cyclohydrolase family. In terms of assembly, homodimer.

It carries out the reaction (6R)-5,10-methylene-5,6,7,8-tetrahydrofolate + NADP(+) = (6R)-5,10-methenyltetrahydrofolate + NADPH. It catalyses the reaction (6R)-5,10-methenyltetrahydrofolate + H2O = (6R)-10-formyltetrahydrofolate + H(+). It functions in the pathway one-carbon metabolism; tetrahydrofolate interconversion. Catalyzes the oxidation of 5,10-methylenetetrahydrofolate to 5,10-methenyltetrahydrofolate and then the hydrolysis of 5,10-methenyltetrahydrofolate to 10-formyltetrahydrofolate. This chain is Bifunctional protein FolD, found in Staphylococcus carnosus (strain TM300).